The sequence spans 294 residues: Cytidine deaminase (294 aa).

CMP/dCMP-type deaminase domains lie at 48 to 168 (DDDA…FGPR) and 186 to 294 (LKGD…VTLA). Residue 89–91 (NME) coordinates substrate. Zn(2+) is bound at residue H102. The active-site Proton donor is E104. 2 residues coordinate Zn(2+): C129 and C132.

Belongs to the cytidine and deoxycytidylate deaminase family. In terms of assembly, homodimer. Zn(2+) serves as cofactor.

The enzyme catalyses cytidine + H2O + H(+) = uridine + NH4(+). It catalyses the reaction 2'-deoxycytidine + H2O + H(+) = 2'-deoxyuridine + NH4(+). Its function is as follows. This enzyme scavenges exogenous and endogenous cytidine and 2'-deoxycytidine for UMP synthesis. This is Cytidine deaminase from Cronobacter sakazakii (strain ATCC BAA-894) (Enterobacter sakazakii).